The chain runs to 345 residues: Inositol phosphoceramide mannosyltransferase 2 (345 aa).

The helical transmembrane segment at 4 to 24 (VIYKFAVFAAVNFFLMSSIVL) threads the bilayer. Residue Asn55 is glycosylated (N-linked (GlcNAc...) asparagine). A helical membrane pass occupies residues 220–240 (YWLPYLTIMLSTGPLSISFLW). Asn269 carries N-linked (GlcNAc...) asparagine glycosylation. Residues 296–316 (LAYVIVAGFCLYFILSYMFFS) form a helical membrane-spanning segment.

The protein belongs to the glycosyltransferase 32 family.

The protein resides in the golgi apparatus. The protein localises to the cis-Golgi network membrane. Its subcellular location is the trans-Golgi network membrane. Functionally, with imt1 and imt3, is required for the synthesis of mannosyl phosphorylinositol ceramide (MIPC). Catalyzes the addition of mannosyl to phosphorylinositol ceramide (IPC). MIPC is essential for cell morphology, cell-surface distribution of ergosterol, localization for plasma-membrane transporters, and lipid-raft-mediated endocytosis of plasma membrane proteins to the vacuole. In Schizosaccharomyces pombe (strain 972 / ATCC 24843) (Fission yeast), this protein is Inositol phosphoceramide mannosyltransferase 2.